The primary structure comprises 668 residues: uncharacterized protein (668 aa).

9 consecutive transmembrane segments (helical) span residues 182–202 (FAFADFFKTGVFVLSFWGILG), 208–228 (PYSYIFAIGVALWGAFFIQFW), 286–306 (VPLFLISGCILLFLIAIAFIV), 321–341 (IVSLLPAVVFQVLTLPFTFIY), 379–399 (ALFLISYIYGPFAEYFVPHYI), 430–450 (IYFLTNAQVINYITILAVPQL), 499–519 (FVLMFGFLVMFSPIYPLAPIF), 557–577 (LSLLSWLGCITMPSICYFYSS), and 587–607 (VIAAVIGLLSEHLWFLLRMFI).

The protein localises to the membrane. This is an uncharacterized protein from Schizosaccharomyces pombe (strain 972 / ATCC 24843) (Fission yeast).